The chain runs to 194 residues: Extracellular globin-E1 (194 aa).

2 Globin domains span residues 1–45 (DISH…MGLS) and 55–194 (GLSG…LRQA). His150 is a binding site for heme b.

This sequence belongs to the globin family. As to quaternary structure, artemia hemoglobin is a dimer of two similar sized subunits. Each subunit represents a globin chain which exists in two forms (alpha and beta), thus making possible three different phenotypes (HB1, alpha(2), HB2, alpha/beta, HB3, beta(2)). The globin chain is a polymer of eight heme-binding covalently linked domains.

This chain is Extracellular globin-E1, found in Artemia sp. (Brine shrimp).